Here is a 359-residue protein sequence, read N- to C-terminus: Homeotic protein knotted-1 (359 aa).

2 disordered regions span residues 1–34 (MEEI…PWAS) and 213–232 (LSSG…TELP). Positions 16–31 (GHGHGQHHHHHHHHHP) are enriched in basic residues. The region spanning 242-262 (ELKHHLLKKYSGYLSSLKQEL) is the ELK domain. The homeobox; TALE-type DNA-binding region spans 263-326 (SKKKKKGKLP…NQRKRHWKPS (64 aa)).

It belongs to the TALE/KNOX homeobox family. In terms of assembly, forms homodimers. Binds to MBP2C; this interaction reduces RNA binding capacity. Expressed in apical meristems of vegetative and floral stems as well as in the underlying ground meristem. Specifically expressed in vascular bundles developing both in the leaf and stem. Very low levels of expression in leaves.

The protein localises to the nucleus. The protein resides in the cell junction. It localises to the plasmodesma. Its subcellular location is the cytoplasm. Its function is as follows. Binds to RNA. Possible transcription factor that regulates genes involved in development. Mutations in KN-1 alter leaf development. Foci of cells along the lateral vein do not differentiate properly but continue to divide, forming knots. May participate in the switch from indeterminate to determinate cell fates. Probably binds to the DNA sequence 5'-TGAC-3'. This chain is Homeotic protein knotted-1 (KN-1), found in Zea mays (Maize).